Reading from the N-terminus, the 388-residue chain is Chorismate synthase (388 aa).

Arginine 39 and arginine 45 together coordinate NADP(+). The segment at 95–118 is disordered; the sequence is EKNEKSRRVSRPRPGHADLVGGMK. Residues 130-132, 251-252, glycine 296, 311-315, and arginine 337 each bind FMN; these read RSS, NA, and KPIPT.

Belongs to the chorismate synthase family. Homotetramer. Requires FMNH2 as cofactor.

The enzyme catalyses 5-O-(1-carboxyvinyl)-3-phosphoshikimate = chorismate + phosphate. Its pathway is metabolic intermediate biosynthesis; chorismate biosynthesis; chorismate from D-erythrose 4-phosphate and phosphoenolpyruvate: step 7/7. Functionally, catalyzes the anti-1,4-elimination of the C-3 phosphate and the C-6 proR hydrogen from 5-enolpyruvylshikimate-3-phosphate (EPSP) to yield chorismate, which is the branch point compound that serves as the starting substrate for the three terminal pathways of aromatic amino acid biosynthesis. This reaction introduces a second double bond into the aromatic ring system. The chain is Chorismate synthase from Listeria innocua serovar 6a (strain ATCC BAA-680 / CLIP 11262).